Reading from the N-terminus, the 254-residue chain is MDRAKLTGVVLRAVDYGESDRVVTLLTAERGKVSAFARGARASRRRFGGALEPFTLLSAEVRERSGSDLLGLDSVSVVRGFGALRGDLGRIACAGYAAELARELVRDHQPHDELFELLVAYLDALDAGPPRPAALRAFELGALRAAGLMPRLDACARCGAPVGEGPVRFDAGEGGALCAGCAPGVPRTLPLAAGTLAALLRLQDGGLAAAASEPLAPPAGREAREALTAFLEHHLGRRLAARRFLDEIGPLLGA.

The protein belongs to the RecO family.

Its function is as follows. Involved in DNA repair and RecF pathway recombination. In Anaeromyxobacter dehalogenans (strain 2CP-1 / ATCC BAA-258), this protein is DNA repair protein RecO.